The following is a 394-amino-acid chain: Cytohesin-4 (394 aa).

Residues 12 to 65 (SSGETEELQRIKWHRKQLLEDIQKLKDEIADVFAQIDCFESAEESRMAQKEKEL) are a coiled coil. The 188-residue stretch at 54-241 (EESRMAQKEK…RNLFDSIKSE (188 aa)) folds into the SEC7 domain. A PH domain is found at 259 to 375 (NPDREGWLLK…WIESIRASIT (117 aa)). Residues 268 to 275 (KLGGRVKT), arginine 279, tyrosine 290, and arginine 300 each bind a 1,2-diacyl-sn-glycero-3-phospho-(1D-myo-inositol-3,4,5-trisphosphate). Residues 386–394 (RKKKIASKQ) form a C-terminal autoinhibitory region region.

Expressed predominantly in peripheral blood leukocytes.

It is found in the cell membrane. Promotes guanine-nucleotide exchange on ARF1 and ARF5. Promotes the activation of ARF factors through replacement of GDP with GTP. This Homo sapiens (Human) protein is Cytohesin-4 (CYTH4).